The chain runs to 459 residues: MQDSHAWSGRFSEPVSELVKHYTASIGFDYRLAEVDIEGSLAHAAMLNRSGVLSDADLEAIRRGMADILDEIRAGKLEWSVDLEDVHMNIERRLTDRIGDAGKRLHTGRSRNDQVATDIRLWLRGEIDATVHLLAGLQSSLLELAERHADTVMPGFTHLQVAQPVTFGHHLLAYVEMLARDAERMLDCRKRVNRLPLGAAALAGTTYPIDRHYTAQLLGFDDVCHNSLDAVSDRDFAIEFTAAASLAMLHLSRLSEELILWMSPRVGFIDIADRFCTGSSIMPQKKNPDVPELVRGKSGRVVGHLIALITLMKAQPLAYNKDNQEDKEPLFDTVDTLQTTLRIYADMMRGVTVKPEAMRAAVLQGYATATDLADYLVKKGLPFRDSHEVVALAVRHAEGLGVDLADLPLAKLREFSALIEDDVFGVLTPEGSLAQRDHVGGTAPAQVRAQIARHRGRLG.

It belongs to the lyase 1 family. Argininosuccinate lyase subfamily.

The protein localises to the cytoplasm. The catalysed reaction is 2-(N(omega)-L-arginino)succinate = fumarate + L-arginine. The protein operates within amino-acid biosynthesis; L-arginine biosynthesis; L-arginine from L-ornithine and carbamoyl phosphate: step 3/3. The protein is Argininosuccinate lyase of Chromobacterium violaceum (strain ATCC 12472 / DSM 30191 / JCM 1249 / CCUG 213 / NBRC 12614 / NCIMB 9131 / NCTC 9757 / MK).